The chain runs to 72 residues: Large ribosomal subunit protein uL29 (72 aa).

This sequence belongs to the universal ribosomal protein uL29 family.

The chain is Large ribosomal subunit protein uL29 from Caldicellulosiruptor bescii (strain ATCC BAA-1888 / DSM 6725 / KCTC 15123 / Z-1320) (Anaerocellum thermophilum).